Here is a 529-residue protein sequence, read N- to C-terminus: MQQRRPIRRALLSVSDKAGIVEFAQALSARGVELLSTGGTARLLAEKGLPVTEVSDYTGFPEMMDGRVKTLHPKVHGGILGRRGQDDAIMEEHQIQPIDMVVVNLYPFAKTVAREGCSLEDAVENIDIGGPTMVRSAAKNHKDVAIVVKSSDYDAIIKEMDDNEGSLTLATRFDLAIKAFEHTAAYDSMIANYFGSMVPAYHGESKEAAGRFPRTLNLNFIKKQDMRYGENSHQQAAFYIEENVKEASVATATQVQGKALSYNNIADTDAALECVKEFAEPACVIVKHANPCGVAISNSILDAYDRAYKTDPTSAFGGIIAFNRELDAETAQAIISRQFVEVIIAPSASEEALKITAAKQNVRVLTCGQWGERVPGLDFKRVNGGLLVQDRDLGMVGAEELRVVTQRQPTEQELRDALFCWKVAKFVKSNAIVYAKNNMTIGIGAGQMSRVYSAKIAGIKAADEGLEVKGSSMASDAFFPFRDGIDAAAAAGVTCVIQPGGSIRDDEVIAAADEHGIAMLFTDMRHFRH.

The MGS-like domain occupies Met1–Val148. Lys287 carries the post-translational modification N6-acetyllysine.

This sequence belongs to the PurH family.

It catalyses the reaction (6R)-10-formyltetrahydrofolate + 5-amino-1-(5-phospho-beta-D-ribosyl)imidazole-4-carboxamide = 5-formamido-1-(5-phospho-D-ribosyl)imidazole-4-carboxamide + (6S)-5,6,7,8-tetrahydrofolate. The catalysed reaction is IMP + H2O = 5-formamido-1-(5-phospho-D-ribosyl)imidazole-4-carboxamide. It participates in purine metabolism; IMP biosynthesis via de novo pathway; 5-formamido-1-(5-phospho-D-ribosyl)imidazole-4-carboxamide from 5-amino-1-(5-phospho-D-ribosyl)imidazole-4-carboxamide (10-formyl THF route): step 1/1. Its pathway is purine metabolism; IMP biosynthesis via de novo pathway; IMP from 5-formamido-1-(5-phospho-D-ribosyl)imidazole-4-carboxamide: step 1/1. The sequence is that of Bifunctional purine biosynthesis protein PurH from Escherichia coli O139:H28 (strain E24377A / ETEC).